Reading from the N-terminus, the 99-residue chain is Meromycolate extension acyl carrier protein (99 aa).

The 79-residue stretch at 3 to 81 (ATQEEIIAGL…DVVAYIQKLE (79 aa)) folds into the Carrier domain. Serine 41 is modified (O-(pantetheine 4'-phosphoryl)serine). An Isoglutamyl lysine isopeptide (Lys-Gln) (interchain with Q-Cter in protein Pup) cross-link involves residue lysine 79.

Belongs to the acyl carrier protein (ACP) family. Post-translationally, 4'-phosphopantetheine is transferred from CoA to a specific serine of apo-AcpM.

Its subcellular location is the cytoplasm. Its function is as follows. Acyl carrier protein involved in meromycolate extension. In Mycolicibacterium smegmatis (strain ATCC 700084 / mc(2)155) (Mycobacterium smegmatis), this protein is Meromycolate extension acyl carrier protein (acpM).